The chain runs to 78 residues: U-scoloptoxin(04)-Er1d (78 aa).

The N-terminal stretch at 1–24 (MTRHLIFAAMLLVCLFVCWNAVGA) is a signal peptide. The propeptide occupies 25 to 28 (RDAR).

It belongs to the scoloptoxin-04 family. In terms of processing, contains 2 disulfide bonds. Expressed by the venom gland.

The protein localises to the secreted. The chain is U-scoloptoxin(04)-Er1d from Ethmostigmus rubripes (Giant centipede).